The sequence spans 77 residues: Homeodomain-only protein (77 aa).

The segment at residues 7 to 65 is a DNA-binding region (homeobox; degenerate); it reads AALGVRLTEDQVKVLEENFTKVSKHPDETTLMLIAAECGLSEEQTAVWFRMRNAQWRKA.

It is found in the nucleus. The protein localises to the cytoplasm. Functionally, atypical homeodomain protein which does not bind DNA and is required to modulate cardiac growth and development. May act via an interaction with SRF, leading to modulate the expression of SRF-dependent cardiac-specific genes and cardiac development. May act as a co-chaperone for HSPA1A and HSPA1B chaperone proteins and assist in chaperone-mediated protein refolding. This chain is Homeodomain-only protein (hopx), found in Danio rerio (Zebrafish).